The following is a 331-amino-acid chain: D-alanine--D-alanine ligase (331 aa).

Residues Lys116–Ala316 form the ATP-grasp domain. Ala142–Thr197 is a binding site for ATP. Positions 269, 283, and 285 each coordinate Mg(2+).

This sequence belongs to the D-alanine--D-alanine ligase family. It depends on Mg(2+) as a cofactor. The cofactor is Mn(2+).

It localises to the cytoplasm. It carries out the reaction 2 D-alanine + ATP = D-alanyl-D-alanine + ADP + phosphate + H(+). Its pathway is cell wall biogenesis; peptidoglycan biosynthesis. Its function is as follows. Cell wall formation. In Ralstonia nicotianae (strain ATCC BAA-1114 / GMI1000) (Ralstonia solanacearum), this protein is D-alanine--D-alanine ligase.